We begin with the raw amino-acid sequence, 402 residues long: Envelope glycoprotein D (402 aa).

An N-terminal signal peptide occupies residues 1–17; it reads MLLAALLAALVARTTLG. 3 disulfides stabilise this stretch: cysteine 66/cysteine 189, cysteine 105/cysteine 205, and cysteine 117/cysteine 126. The profusion stretch occupies residues 238 to 316; sequence YRKNGRTLPR…RPTPRPPRPE (79 aa). A disordered region spans residues 252-350; sequence ATPYAIDPAR…PRTPAAPGVS (99 aa). Basic residues predominate over residues 269–278; the sequence is PRPRPRPRPR. The segment covering 282-292 has biased composition (pro residues); that stretch reads EPAPATPAPPD. Residues 293–304 are compositionally biased toward basic and acidic residues; sequence RLPEPATRDHAA. The helical transmembrane segment at 356–376 threads the bilayer; sequence IVGTGTAMGALLVGVCVYIFF.

The protein belongs to the herpesviridae glycoprotein D family. In terms of processing, not N-glycosylated.

It localises to the virion membrane. Functionally, envelope glycoprotein that binds to the host cell entry receptor NECTIN1, promoting the virus entry into host cells. In contrast, does not use host TNFRSF14 as receptor. May trigger fusion with host membrane, by recruiting the fusion machinery composed of gB and gH/gL. This chain is Envelope glycoprotein D, found in Suid herpesvirus 1 (strain Rice) (SuHV-1).